The sequence spans 351 residues: Anthranilate phosphoribosyltransferase (351 aa).

Residues Gly80, 83 to 84 (GD), Thr88, 90 to 93 (NIST), 108 to 116 (KHGNRSITS), and Ser120 each bind 5-phospho-alpha-D-ribose 1-diphosphate. Gly80 provides a ligand contact to anthranilate. Residue Ser92 participates in Mg(2+) binding. Asn111 is a binding site for anthranilate. Arg166 serves as a coordination point for anthranilate. The Mg(2+) site is built by Asp229 and Glu230.

The protein belongs to the anthranilate phosphoribosyltransferase family. As to quaternary structure, homodimer. Requires Mg(2+) as cofactor.

It catalyses the reaction N-(5-phospho-beta-D-ribosyl)anthranilate + diphosphate = 5-phospho-alpha-D-ribose 1-diphosphate + anthranilate. The protein operates within amino-acid biosynthesis; L-tryptophan biosynthesis; L-tryptophan from chorismate: step 2/5. Its function is as follows. Catalyzes the transfer of the phosphoribosyl group of 5-phosphorylribose-1-pyrophosphate (PRPP) to anthranilate to yield N-(5'-phosphoribosyl)-anthranilate (PRA). The chain is Anthranilate phosphoribosyltransferase from Chlorobaculum parvum (strain DSM 263 / NCIMB 8327) (Chlorobium vibrioforme subsp. thiosulfatophilum).